Consider the following 255-residue polypeptide: Proteasome subunit alpha (255 aa).

A compositionally biased stretch (polar residues) spans 190-201; that stretch reads PSTSGASGNGET. The segment at 190–255 is disordered; the sequence is PSTSGASGNG…DKSSGDGEQN (66 aa). Basic and acidic residues predominate over residues 202-217; sequence EPSKLEVAILDRERPG.

It belongs to the peptidase T1A family. As to quaternary structure, the 20S proteasome core is composed of 14 alpha and 14 beta subunits that assemble into four stacked heptameric rings, resulting in a barrel-shaped structure. The two inner rings, each composed of seven catalytic beta subunits, are sandwiched by two outer rings, each composed of seven alpha subunits. The catalytic chamber with the active sites is on the inside of the barrel. Has a gated structure, the ends of the cylinder being occluded by the N-termini of the alpha-subunits. Is capped by the proteasome-associated ATPase, ARC.

It localises to the cytoplasm. It participates in protein degradation; proteasomal Pup-dependent pathway. The formation of the proteasomal ATPase ARC-20S proteasome complex, likely via the docking of the C-termini of ARC into the intersubunit pockets in the alpha-rings, may trigger opening of the gate for substrate entry. Interconversion between the open-gate and close-gate conformations leads to a dynamic regulation of the 20S proteasome proteolysis activity. Functionally, component of the proteasome core, a large protease complex with broad specificity involved in protein degradation. The polypeptide is Proteasome subunit alpha (Saccharomonospora viridis (strain ATCC 15386 / DSM 43017 / JCM 3036 / CCUG 5913 / NBRC 12207 / NCIMB 9602 / P101) (Thermoactinomyces viridis)).